A 340-amino-acid chain; its full sequence is MPSLVDPVANKTDEGNNRTDLKAPEPEHCPGTESEEAGKADACQGCPNQDICASAPKGPDPDLPLIKDRMKGVKHKILVLSGKGGVGKSTFSSLLGWGFASDLDREVGLMDIDICGPSLPKMMGSEGEQIHTSLSGWSPIYVSDNLGMMSVGFMLPNQDDAIIWRGAKKNGLIKQFLKDVDWGNLDYLVVDTPPGTSDEHLSVTQYLKESGVDGAVVITTPQEVALLDVRKELDFCRKSGIKIIGLVENMSGFVCPNCKGESFIFAPTTGGGKALAEEFNIPFLGSVPLDPRIGKSCDHGESFVEEYPDSPATTAILDVIRQIREAVGDPQEDEDDDMDE.

The segment at M1 to D41 is disordered. A compositionally biased stretch (basic and acidic residues) spans K11–P30. Residues C29, C43, C46, and C52 each contribute to the [4Fe-4S] cluster site. ATP is bound at residue G82–S89. The [4Fe-4S] cluster site is built by C255 and C258.

Belongs to the Mrp/NBP35 ATP-binding proteins family. NUBP1/NBP35 subfamily. Heterotetramer of 2 NBP35 and 2 CFD1 chains. [4Fe-4S] cluster serves as cofactor.

It localises to the cytoplasm. It is found in the nucleus. Functionally, component of the cytosolic iron-sulfur (Fe/S) protein assembly (CIA) machinery. Required for maturation of extramitochondrial Fe-S proteins. The NBP35-CFD1 heterotetramer forms a Fe-S scaffold complex, mediating the de novo assembly of an Fe-S cluster and its transfer to target apoproteins. Required for biogenesis and export of both ribosomal subunits, which may reflect a role in assembly of the Fe/S clusters in RLI1, a protein which performs rRNA processing and ribosome export. The chain is Cytosolic Fe-S cluster assembly factor NBP35 from Yarrowia lipolytica (strain CLIB 122 / E 150) (Yeast).